The sequence spans 246 residues: mRNA-decapping protein g5R (246 aa).

The Nudix hydrolase domain maps to 91–239 (KYQKFKKNWL…IIGPAFNFIK (149 aa)). Positions 128–149 (GKPKENESDLACAIREFEEETG) match the Nudix box motif. Residue Glu134 participates in Mg(2+) binding. Glu143 (nucleophile) is an active-site residue. Residues Glu147 and Glu169 each contribute to the Mg(2+) site.

This sequence belongs to the Nudix hydrolase family. DIPP subfamily. Interacts with host RPL23A. The cofactor is Mg(2+). It depends on Mn(2+) as a cofactor.

It localises to the host rough endoplasmic reticulum. The catalysed reaction is diphospho-myo-inositol polyphosphate + H2O = myo-inositol polyphosphate + phosphate.. In terms of biological role, decapping enzyme required for the removal of the 5'-end m7GpppN cap tethered to viral and host mRNAs to allow their decay in cells. May therefore accelerate viral and cellular mRNA turnover to eliminate competing host mRNAs and allow stage-specific synthesis of viral proteins. Acceleration of the turnover of cellular transcripts may even promote the shutoff of host protein synthesis. In addition to the mRNA cap, g5R also efficiently hydrolyzes diphosphoinositol polyphosphates. Down-regulation of the level of PP-InsP5 (diphosphoinositol pentakisphosphate) may play a role in viral manipulation of the cellular secretory pathway, a step necessary for the formation of virions. Binds viral and cellular poly(A) mRNAs, thereby decreasing both types of mRNAs. This African swine fever virus (isolate Pig/Kenya/KEN-50/1950) (ASFV) protein is mRNA-decapping protein g5R.